The chain runs to 508 residues: ATP synthase subunit alpha, chloroplastic (508 aa).

171 to 178 contributes to the ATP binding site; it reads GDRQTGKT.

Belongs to the ATPase alpha/beta chains family. As to quaternary structure, F-type ATPases have 2 components, CF(1) - the catalytic core - and CF(0) - the membrane proton channel. CF(1) has five subunits: alpha(3), beta(3), gamma(1), delta(1), epsilon(1). CF(0) has four main subunits: a, b, b' and c.

Its subcellular location is the plastid. The protein resides in the chloroplast thylakoid membrane. It catalyses the reaction ATP + H2O + 4 H(+)(in) = ADP + phosphate + 5 H(+)(out). Functionally, produces ATP from ADP in the presence of a proton gradient across the membrane. The alpha chain is a regulatory subunit. The chain is ATP synthase subunit alpha, chloroplastic from Gnetum parvifolium (Small-leaved jointfir).